A 334-amino-acid chain; its full sequence is Transmembrane protein 41 homolog (334 aa).

Residue Asn43 is glycosylated (N-linked (GlcNAc...) asparagine). The tract at residues 47-79 is disordered; that stretch reads KNKNNNIDNKKNSNNNNNNNNNNNNKNSISNNN. N-linked (GlcNAc...) asparagine glycosylation occurs at Asn83. 6 helical membrane passes run 97–117, 156–176, 192–214, 246–266, 269–289, and 305–325; these read LPLW…VFLF, FIVI…SIPG, VGFP…ISYY, IVFL…ASPL, VPIH…TFLA, and IFDL…ILPT.

It belongs to the TMEM41 family.

Its subcellular location is the membrane. This Dictyostelium discoideum (Social amoeba) protein is Transmembrane protein 41 homolog.